The following is a 427-amino-acid chain: Glutamate-1-semialdehyde 2,1-aminomutase (427 aa).

Lys265 carries the N6-(pyridoxal phosphate)lysine modification.

The protein belongs to the class-III pyridoxal-phosphate-dependent aminotransferase family. HemL subfamily. As to quaternary structure, homodimer. Pyridoxal 5'-phosphate is required as a cofactor.

The protein resides in the cytoplasm. It carries out the reaction (S)-4-amino-5-oxopentanoate = 5-aminolevulinate. It participates in porphyrin-containing compound metabolism; protoporphyrin-IX biosynthesis; 5-aminolevulinate from L-glutamyl-tRNA(Glu): step 2/2. The sequence is that of Glutamate-1-semialdehyde 2,1-aminomutase from Actinobacillus succinogenes (strain ATCC 55618 / DSM 22257 / CCUG 43843 / 130Z).